The primary structure comprises 229 residues: Pdp3-interacting factor 1 (229 aa).

D12 functions as the Nucleophile in the catalytic mechanism. 3 residues coordinate Mg(2+): D12, D14, and D176. D14 serves as the catalytic Proton donor.

The protein belongs to the HAD-like hydrolase superfamily. As to quaternary structure, component of the mst2 complex composed of at least eaf6, mst2, nto1, pdp3, ptf1, ptf2 and tfg3. Requires Mg(2+) as cofactor.

It is found in the cytoplasm. The protein resides in the nucleus. The enzyme catalyses D-ribitol 5-phosphate + H2O = ribitol + phosphate. It carries out the reaction D-sorbitol 6-phosphate + H2O = D-sorbitol + phosphate. The catalysed reaction is sn-glycerol 1-phosphate + H2O = glycerol + phosphate. It catalyses the reaction D-erythrose 4-phosphate + H2O = D-erythrose + phosphate. Its function is as follows. Component of the mst2 complex which is a highly specific H3 lysine 14 (H3K14) acetyltransferase that functions together with gcn5 to regulate global levels of H3K14 acetylation (H3K14ac), critical for DNA damage checkpoint activation. Functionally, may also function as a sugar alcohol (polyol) phosphatase that prevents accumulation of toxic levels of polyol phosphates, which can impair glycolysis by inhibiting glucose-6-phosphate isomerase. This Schizosaccharomyces pombe (strain 972 / ATCC 24843) (Fission yeast) protein is Pdp3-interacting factor 1.